The sequence spans 556 residues: Arginine--tRNA ligase 1 (556 aa).

The 'HIGH' region signature appears at Ala132–His142.

This sequence belongs to the class-I aminoacyl-tRNA synthetase family. As to quaternary structure, monomer.

Its subcellular location is the cytoplasm. It catalyses the reaction tRNA(Arg) + L-arginine + ATP = L-arginyl-tRNA(Arg) + AMP + diphosphate. The polypeptide is Arginine--tRNA ligase 1 (argS1) (Halalkalibacterium halodurans (strain ATCC BAA-125 / DSM 18197 / FERM 7344 / JCM 9153 / C-125) (Bacillus halodurans)).